Consider the following 252-residue polypeptide: Triosephosphate isomerase (252 aa).

9–11 (NWK) is a binding site for substrate. Residue H100 is the Electrophile of the active site. The Proton acceptor role is filled by E171. Substrate-binding positions include G177, S216, and 237–238 (GG).

The protein belongs to the triosephosphate isomerase family. Homodimer.

It localises to the cytoplasm. The enzyme catalyses D-glyceraldehyde 3-phosphate = dihydroxyacetone phosphate. Its pathway is carbohydrate biosynthesis; gluconeogenesis. It functions in the pathway carbohydrate degradation; glycolysis; D-glyceraldehyde 3-phosphate from glycerone phosphate: step 1/1. Its function is as follows. Involved in the gluconeogenesis. Catalyzes stereospecifically the conversion of dihydroxyacetone phosphate (DHAP) to D-glyceraldehyde-3-phosphate (G3P). The protein is Triosephosphate isomerase of Polynucleobacter necessarius subsp. necessarius (strain STIR1).